Here is a 332-residue protein sequence, read N- to C-terminus: 2,3-diketo-L-gulonate reductase (332 aa).

Residue His-44 is the Proton donor of the active site. Residues 168–174, 224–225, and 304–306 contribute to the NAD(+) site; these read ITMVDMS, WK, and GHE.

Belongs to the LDH2/MDH2 oxidoreductase family. DlgD subfamily. Homodimer.

It is found in the cytoplasm. It carries out the reaction 3-dehydro-L-gulonate + NAD(+) = 2,3-dioxo-L-gulonate + NADH + H(+). The catalysed reaction is 3-dehydro-L-gulonate + NADP(+) = 2,3-dioxo-L-gulonate + NADPH + H(+). Its function is as follows. Catalyzes the reduction of 2,3-diketo-L-gulonate in the presence of NADH, to form 3-keto-L-gulonate. The protein is 2,3-diketo-L-gulonate reductase of Klebsiella pneumoniae (strain 342).